An 89-amino-acid polypeptide reads, in one-letter code: MATVIAKVKVMPTSPEVEKEALKETLKELVENNDAKCRGVSDEPLAFGLYTVFVMVEMEEKEGGMDPIEEAMNALENVESAEVVELSLV.

It belongs to the EF-1-beta/EF-1-delta family.

Promotes the exchange of GDP for GTP in EF-1-alpha/GDP, thus allowing the regeneration of EF-1-alpha/GTP that could then be used to form the ternary complex EF-1-alpha/GTP/AAtRNA. The protein is Elongation factor 1-beta of Methanococcus maripaludis (strain C5 / ATCC BAA-1333).